Reading from the N-terminus, the 364-residue chain is Probable methyltransferase ICS2 (364 aa).

Y18, C61, D98, L99, S133, and F134 together coordinate S-adenosyl-L-homocysteine. Residues N172, D258, F260, and N261 each contribute to the Mg(2+) site.

This sequence belongs to the methyltransferase superfamily. Type-7 methyltransferase family. It depends on Mg(2+) as a cofactor.

Its function is as follows. No detectable N-methyltransferase activity. The chain is Probable methyltransferase ICS2 from Camellia irrawadiensis (Burmese tea).